The primary structure comprises 33 residues: Pardaxin P-5 (33 aa).

The protein belongs to the pardaxin family. Monomer. In aqueous solution exists as a tetramer.

It is found in the secreted. The protein localises to the target cell membrane. In terms of biological role, exhibits unusual shark repellent and surfactant properties. Forms voltage-dependent, ion-permeable channels in membranes. At high concentration causes cell membrane lysis. The sequence is that of Pardaxin P-5 from Pardachirus marmoratus (Finless sole).